A 121-amino-acid polypeptide reads, in one-letter code: Small ribosomal subunit protein uS13 (121 aa).

The segment at 92-121 is disordered; that stretch reads RKGLPMRGQRTRTNARTRKGPRRAAQALKK.

The protein belongs to the universal ribosomal protein uS13 family. In terms of assembly, part of the 30S ribosomal subunit. Forms a loose heterodimer with protein S19. Forms two bridges to the 50S subunit in the 70S ribosome.

Its function is as follows. Located at the top of the head of the 30S subunit, it contacts several helices of the 16S rRNA. In the 70S ribosome it contacts the 23S rRNA (bridge B1a) and protein L5 of the 50S subunit (bridge B1b), connecting the 2 subunits; these bridges are implicated in subunit movement. Contacts the tRNAs in the A and P-sites. This chain is Small ribosomal subunit protein uS13, found in Burkholderia thailandensis (strain ATCC 700388 / DSM 13276 / CCUG 48851 / CIP 106301 / E264).